We begin with the raw amino-acid sequence, 139 residues long: ATP synthase epsilon chain (139 aa).

It belongs to the ATPase epsilon chain family. As to quaternary structure, F-type ATPases have 2 components, CF(1) - the catalytic core - and CF(0) - the membrane proton channel. CF(1) has five subunits: alpha(3), beta(3), gamma(1), delta(1), epsilon(1). CF(0) has three main subunits: a, b and c.

The protein resides in the cell inner membrane. In terms of biological role, produces ATP from ADP in the presence of a proton gradient across the membrane. The sequence is that of ATP synthase epsilon chain from Acinetobacter baumannii (strain AB307-0294).